The following is a 101-amino-acid chain: Small ribosomal subunit protein uS14 (101 aa).

The segment at 1 to 20 is disordered; the sequence is MAKISAVERNKKRERLTKRD.

Belongs to the universal ribosomal protein uS14 family. Part of the 30S ribosomal subunit. Contacts proteins S3 and S10.

Binds 16S rRNA, required for the assembly of 30S particles and may also be responsible for determining the conformation of the 16S rRNA at the A site. This chain is Small ribosomal subunit protein uS14, found in Rhodospirillum rubrum (strain ATCC 11170 / ATH 1.1.1 / DSM 467 / LMG 4362 / NCIMB 8255 / S1).